Reading from the N-terminus, the 222-residue chain is MKQTSAVVASKVIAADKAAALALTPVSRETEQRLDRYVALLLEWQAKTNLVAPSTLPHLWTRHISDSLQLLDLAPDAKIWVDLGSGGGFPGVVLACALAERPGAEVHLVERIAKKAAFLREAIRVTGAPGIVHLSEIGDIVEKWSGGVDCVTARALAPLHQLIGFAEPLVKRGAKALFLKGQDVEAELTESTKYWKIEPKLYSSRTGGQGWIVAIDCIERHN.

Residues glycine 84, phenylalanine 89, 141–142, and arginine 154 contribute to the S-adenosyl-L-methionine site; that span reads VE.

The protein belongs to the methyltransferase superfamily. RNA methyltransferase RsmG family.

It localises to the cytoplasm. The enzyme catalyses guanosine(527) in 16S rRNA + S-adenosyl-L-methionine = N(7)-methylguanosine(527) in 16S rRNA + S-adenosyl-L-homocysteine. Specifically methylates the N7 position of guanine in position 527 of 16S rRNA. This is Ribosomal RNA small subunit methyltransferase G from Bradyrhizobium sp. (strain BTAi1 / ATCC BAA-1182).